The sequence spans 839 residues: Katanin p80 WD40 repeat-containing subunit B1 homolog KTN80.3 (839 aa).

WD repeat units follow at residues 14–54 (AHSA…AILS), 57–96 (GHSS…VVRT), 99–138 (GHRS…CIHT), 141–182 (GHTR…HEFK), 184–222 (HEGK…LIGS), 225–265 (TETT…DGVD), and 267–304 (GWSN…TEPM). A DWD box motif is present at residues 115 to 131 (FFASGSLDTNLKIWDIR). Disordered regions lie at residues 303-340 (PMSG…LGKL), 357-435 (GKLS…KSAS), 501-561 (LQSK…RTNK), and 575-648 (SLVR…PSNM). 6 stretches are compositionally biased toward polar residues: residues 307–334 (GATQ…NSSK), 375–385 (TGRSSVSQSSD), 411–435 (TLSS…KSAS), 501–533 (LQSK…QSQP), 589–602 (DLIS…SSPT), and 630–648 (VSSS…PSNM).

The protein belongs to the WD repeat KATNB1 family. Component of KTN80-KTN1 complexes composed of a hexamer of KTN1-KTN80 heterodimers that sense microtubule (MT) geometry to confer precise MT severing. Interacts directly with AAA1/KTN1 and KTN80.1, and weakly with KTN80.4. As to expression, expressed in siliques, flowers, leaves, stems and roots.

It localises to the cytoplasm. Its subcellular location is the cytoskeleton. Its function is as follows. May participate in a complex which severs microtubules in an ATP-dependent manner. Microtubule severing may promote rapid reorganization of cellular microtubule arrays. Confers precision to microtubule (MT) severing by specific targeting of KTN1 to MT cleavage sites such as crossover or branching nucleation sites. Together with other KTN80s, regulates cell elongation by modulating MT organization. This Arabidopsis thaliana (Mouse-ear cress) protein is Katanin p80 WD40 repeat-containing subunit B1 homolog KTN80.3.